The sequence spans 129 residues: 3-aminoacrylate deaminase RutC (129 aa).

Belongs to the RutC family.

The catalysed reaction is (Z)-3-aminoacrylate + H2O + H(+) = 3-oxopropanoate + NH4(+). Functionally, involved in pyrimidine catabolism. Catalyzes the deamination of 3-aminoacrylate to malonic semialdehyde, a reaction that can also occur spontaneously. RutC may facilitate the reaction and modulate the metabolic fitness, rather than catalyzing essential functions. The sequence is that of 3-aminoacrylate deaminase RutC from Caulobacter vibrioides (strain ATCC 19089 / CIP 103742 / CB 15) (Caulobacter crescentus).